Consider the following 577-residue polypeptide: Pentatricopeptide repeat-containing protein At1g63400 (577 aa).

PPR repeat units lie at residues 49–83 (GSGD…RPLP), 84–118 (SIFE…GISH), 119–153 (NLYT…GYEP), 154–188 (SIVT…GYRP), 189–223 (DTIT…GCQP), 224–258 (NLVT…KIEA), 259–293 (NVVI…GVRP), 294–328 (NVIT…KINP), 329–363 (NVVT…SIDP), 364–398 (DIFT…DCFP), 399–433 (NVVT…GLVG), 434–468 (NTVT…GVHP), 469–503 (NIMT…KMEP), 504–538 (TIYT…GVKP), and 539–573 (DVII…GPLP).

This sequence belongs to the PPR family. P subfamily.

This is Pentatricopeptide repeat-containing protein At1g63400 from Arabidopsis thaliana (Mouse-ear cress).